Consider the following 411-residue polypeptide: Formate-dependent phosphoribosylglycinamide formyltransferase (411 aa).

25-26 (EL) is a binding site for N(1)-(5-phospho-beta-D-ribosyl)glycinamide. Residues arginine 118, lysine 159, 164–169 (SSGAGQ), 199–202 (EQYI), and glutamate 207 contribute to the ATP site. The region spanning 123–318 (TFAHDKLGLP…EFDLHARAIL (196 aa)) is the ATP-grasp domain. Mg(2+) is bound by residues glutamate 277 and glutamate 289. N(1)-(5-phospho-beta-D-ribosyl)glycinamide-binding positions include aspartate 296, lysine 366, and 373–374 (RR).

Belongs to the PurK/PurT family. Homodimer.

The catalysed reaction is N(1)-(5-phospho-beta-D-ribosyl)glycinamide + formate + ATP = N(2)-formyl-N(1)-(5-phospho-beta-D-ribosyl)glycinamide + ADP + phosphate + H(+). The protein operates within purine metabolism; IMP biosynthesis via de novo pathway; N(2)-formyl-N(1)-(5-phospho-D-ribosyl)glycinamide from N(1)-(5-phospho-D-ribosyl)glycinamide (formate route): step 1/1. Involved in the de novo purine biosynthesis. Catalyzes the transfer of formate to 5-phospho-ribosyl-glycinamide (GAR), producing 5-phospho-ribosyl-N-formylglycinamide (FGAR). Formate is provided by PurU via hydrolysis of 10-formyl-tetrahydrofolate. In Corynebacterium jeikeium (strain K411), this protein is Formate-dependent phosphoribosylglycinamide formyltransferase.